Consider the following 325-residue polypeptide: Tetraacyldisaccharide 4'-kinase (325 aa).

Position 51 to 58 (51 to 58 (VVGGAGKT)) interacts with ATP.

Belongs to the LpxK family.

It carries out the reaction a lipid A disaccharide + ATP = a lipid IVA + ADP + H(+). Its pathway is glycolipid biosynthesis; lipid IV(A) biosynthesis; lipid IV(A) from (3R)-3-hydroxytetradecanoyl-[acyl-carrier-protein] and UDP-N-acetyl-alpha-D-glucosamine: step 6/6. Its function is as follows. Transfers the gamma-phosphate of ATP to the 4'-position of a tetraacyldisaccharide 1-phosphate intermediate (termed DS-1-P) to form tetraacyldisaccharide 1,4'-bis-phosphate (lipid IVA). The protein is Tetraacyldisaccharide 4'-kinase of Paramagnetospirillum magneticum (strain ATCC 700264 / AMB-1) (Magnetospirillum magneticum).